Here is a 141-residue protein sequence, read N- to C-terminus: Hemoglobin subunit alpha-D (141 aa).

The region spanning 1–141 (MLTAEDKKLI…VAAVLAEKYR (141 aa)) is the Globin domain. Heme b is bound by residues H58 and H87.

The protein belongs to the globin family. As to quaternary structure, heterotetramer of two alpha-D chains and two beta chains. As to expression, red blood cells.

Involved in oxygen transport from the lung to the various peripheral tissues. This Anas platyrhynchos (Mallard) protein is Hemoglobin subunit alpha-D (HBAD).